The primary structure comprises 459 residues: Putrescine aminotransferase (459 aa).

Pyridoxal 5'-phosphate contacts are provided by residues 150 to 151 (GT) and Q274. K300 is subject to N6-(pyridoxal phosphate)lysine. T332 is a binding site for pyridoxal 5'-phosphate.

Belongs to the class-III pyridoxal-phosphate-dependent aminotransferase family. Putrescine aminotransferase subfamily. Pyridoxal 5'-phosphate is required as a cofactor.

The catalysed reaction is an alkane-alpha,omega-diamine + 2-oxoglutarate = an omega-aminoaldehyde + L-glutamate. It carries out the reaction putrescine + 2-oxoglutarate = 1-pyrroline + L-glutamate + H2O. The enzyme catalyses cadaverine + 2-oxoglutarate = 5-aminopentanal + L-glutamate. It participates in amine and polyamine degradation; putrescine degradation; 4-aminobutanal from putrescine (transaminase route): step 1/1. Catalyzes the aminotransferase reaction from putrescine to 2-oxoglutarate, leading to glutamate and 4-aminobutanal, which spontaneously cyclizes to form 1-pyrroline. This is the first step in one of two pathways for putrescine degradation, where putrescine is converted into 4-aminobutanoate (gamma-aminobutyrate or GABA) via 4-aminobutanal. Also functions as a cadaverine transaminase in a a L-lysine degradation pathway to succinate that proceeds via cadaverine, glutarate and L-2-hydroxyglutarate. This is Putrescine aminotransferase from Escherichia coli O6:H1 (strain CFT073 / ATCC 700928 / UPEC).